The following is a 385-amino-acid chain: tRNA 2-selenouridine synthase (385 aa).

In terms of domain architecture, Rhodanese spans 15–138; the sequence is FIADTPLIDV…ARQFLISTID (124 aa). Cysteine 98 acts as the S-selanylcysteine intermediate in catalysis.

Belongs to the SelU family. Monomer.

The catalysed reaction is 5-methylaminomethyl-2-thiouridine(34) in tRNA + selenophosphate + (2E)-geranyl diphosphate + H2O + H(+) = 5-methylaminomethyl-2-selenouridine(34) in tRNA + (2E)-thiogeraniol + phosphate + diphosphate. It catalyses the reaction 5-methylaminomethyl-2-thiouridine(34) in tRNA + (2E)-geranyl diphosphate = 5-methylaminomethyl-S-(2E)-geranyl-thiouridine(34) in tRNA + diphosphate. The enzyme catalyses 5-methylaminomethyl-S-(2E)-geranyl-thiouridine(34) in tRNA + selenophosphate + H(+) = 5-methylaminomethyl-2-(Se-phospho)selenouridine(34) in tRNA + (2E)-thiogeraniol. It carries out the reaction 5-methylaminomethyl-2-(Se-phospho)selenouridine(34) in tRNA + H2O = 5-methylaminomethyl-2-selenouridine(34) in tRNA + phosphate. In terms of biological role, involved in the post-transcriptional modification of the uridine at the wobble position (U34) of tRNA(Lys), tRNA(Glu) and tRNA(Gln). Catalyzes the conversion of 2-thiouridine (S2U-RNA) to 2-selenouridine (Se2U-RNA). Acts in a two-step process involving geranylation of 2-thiouridine (S2U) to S-geranyl-2-thiouridine (geS2U) and subsequent selenation of the latter derivative to 2-selenouridine (Se2U) in the tRNA chain. This Nitrosomonas europaea (strain ATCC 19718 / CIP 103999 / KCTC 2705 / NBRC 14298) protein is tRNA 2-selenouridine synthase.